The primary structure comprises 302 residues: Protoheme IX farnesyltransferase 1 (302 aa).

Helical transmembrane passes span 27–47, 49–69, 98–118, 121–141, 149–169, 175–195, 228–248, and 281–301; these read VVAL…VTDF, WIQA…AAAF, SVAI…YAWV, LTAW…TMYL, IVIA…AVTG, AWLL…ALAI, LLTL…IYLF, and IYHL…GMVL.

Belongs to the UbiA prenyltransferase family. Protoheme IX farnesyltransferase subfamily.

It localises to the cell inner membrane. It carries out the reaction heme b + (2E,6E)-farnesyl diphosphate + H2O = Fe(II)-heme o + diphosphate. It functions in the pathway porphyrin-containing compound metabolism; heme O biosynthesis; heme O from protoheme: step 1/1. Functionally, converts heme B (protoheme IX) to heme O by substitution of the vinyl group on carbon 2 of heme B porphyrin ring with a hydroxyethyl farnesyl side group. The sequence is that of Protoheme IX farnesyltransferase 1 from Vibrio parahaemolyticus serotype O3:K6 (strain RIMD 2210633).